The following is a 117-amino-acid chain: Large ribosomal subunit protein bL19 (117 aa).

The protein belongs to the bacterial ribosomal protein bL19 family.

Its function is as follows. This protein is located at the 30S-50S ribosomal subunit interface and may play a role in the structure and function of the aminoacyl-tRNA binding site. This chain is Large ribosomal subunit protein bL19, found in Shewanella piezotolerans (strain WP3 / JCM 13877).